Reading from the N-terminus, the 22-residue chain is Cysteine proteinase (22 aa).

The interval 1-22 (GADDSDWRKKGAVNVIXKDQGQ) is disordered.

This sequence belongs to the peptidase C1 family.

The polypeptide is Cysteine proteinase (Trichomonas vaginalis).